Here is a 494-residue protein sequence, read N- to C-terminus: Trigger factor (494 aa).

The PPIase FKBP-type domain occupies 169 to 254 (GDRITMDYVG…VKEVAAPADV (86 aa)). The tract at residues 441 to 494 (LAEEEGEAKAETKKAAPKKKAAAKAEAADAGEGEEAAPKKKAAPKKKAADESAE) is disordered.

Belongs to the FKBP-type PPIase family. Tig subfamily.

Its subcellular location is the cytoplasm. It carries out the reaction [protein]-peptidylproline (omega=180) = [protein]-peptidylproline (omega=0). In terms of biological role, involved in protein export. Acts as a chaperone by maintaining the newly synthesized protein in an open conformation. Functions as a peptidyl-prolyl cis-trans isomerase. This Rhizobium johnstonii (strain DSM 114642 / LMG 32736 / 3841) (Rhizobium leguminosarum bv. viciae) protein is Trigger factor.